Consider the following 115-residue polypeptide: NAD(P)H-quinone oxidoreductase subunit M (115 aa).

This sequence belongs to the complex I NdhM subunit family. In terms of assembly, NDH-1 can be composed of about 15 different subunits; different subcomplexes with different compositions have been identified which probably have different functions.

It localises to the cellular thylakoid membrane. It catalyses the reaction a plastoquinone + NADH + (n+1) H(+)(in) = a plastoquinol + NAD(+) + n H(+)(out). It carries out the reaction a plastoquinone + NADPH + (n+1) H(+)(in) = a plastoquinol + NADP(+) + n H(+)(out). In terms of biological role, NDH-1 shuttles electrons from an unknown electron donor, via FMN and iron-sulfur (Fe-S) centers, to quinones in the respiratory and/or the photosynthetic chain. The immediate electron acceptor for the enzyme in this species is believed to be plastoquinone. Couples the redox reaction to proton translocation, and thus conserves the redox energy in a proton gradient. Cyanobacterial NDH-1 also plays a role in inorganic carbon-concentration. In Prochlorococcus marinus (strain SARG / CCMP1375 / SS120), this protein is NAD(P)H-quinone oxidoreductase subunit M.